The following is a 562-amino-acid chain: Arginine--tRNA ligase (562 aa).

Residues 121 to 131 (PNIAKPMGMGH) carry the 'HIGH' region motif.

Belongs to the class-I aminoacyl-tRNA synthetase family. In terms of assembly, monomer.

It is found in the cytoplasm. The enzyme catalyses tRNA(Arg) + L-arginine + ATP = L-arginyl-tRNA(Arg) + AMP + diphosphate. This is Arginine--tRNA ligase from Limosilactobacillus reuteri (strain DSM 20016) (Lactobacillus reuteri).